The chain runs to 187 residues: Capsid protein VP10 (187 aa).

Cysteines 45 and 51 form a disulfide.

The protein resides in the virion. In terms of biological role, VP10 self-assembles, together with capsid protein VP4, to form an icosahedral caspid of 87 nm in diameter, with a T=43 symmetry and composed of 420 hexamers and 12 pentamers. VP4 proteins arrange into hexons, while VP10 proteins form the pentameric densities located at the 5-fold axes in the virion. The stoichiometry of VP4:VP10 is 42:1. This Sulfolobus polyhedral virus 1 (SPV1) protein is Capsid protein VP10.